The chain runs to 549 residues: Sorting nexin-33 (549 aa).

Positions 1-61 constitute an SH3 domain; that stretch reads MALKARALYS…PASYVEILRP (61 aa). Over residues 66 to 83 the composition is skewed to polar residues; it reads VQVDYSGHTQGYTDSPHQ. The tract at residues 66–137 is disordered; sequence VQVDYSGHTQ…RPEYTHRPRP (72 aa). The span at 86–101 shows a compositional bias: acidic residues; it reads YDDDEEDDDDWDDWDD. Residues 110–119 show a composition bias toward polar residues; the sequence is SGSNGVSRSQ. A compositionally biased stretch (basic and acidic residues) spans 127-137; the sequence is PRPEYTHRPRP. One can recognise a PX domain in the interval 205–315; that stretch reads FSCSVEEPTK…HFLSCQDEKQ (111 aa). One can recognise a BAR domain in the interval 346-549; that stretch reads LQDVEERVDV…EKTLHMYDDL (204 aa).

It belongs to the sorting nexin family.

It localises to the cytoplasm. Its subcellular location is the cytosol. It is found in the membrane. The protein localises to the cytoplasmic vesicle membrane. Functionally, plays a role in the reorganization of the cytoskeleton, endocytosis and cellular vesicle trafficking, both during interphase and at the end of mitotic cell divisions. Required for efficient progress through mitosis and cytokinesis. Required for normal formation of the cleavage furrow at the end of mitosis. Modulates endocytosis of cell-surface proteins. Promotes membrane tubulation (in vitro). May promote the formation of macropinosomes. The protein is Sorting nexin-33 (snx33) of Xenopus tropicalis (Western clawed frog).